Here is a 109-residue protein sequence, read N- to C-terminus: Staphostatin B (109 aa).

Residues 97–101 (IGTSR) are binds to staphopain B.

This sequence belongs to the protease inhibitor I57 (SspC) family. In terms of assembly, forms a stable non-covalent complex with prematurely activated/folded SspB.

Its subcellular location is the cytoplasm. Its function is as follows. Specifically inhibits the cysteine protease staphopain B (SspB) by blocking the active site of the enzyme. Probably required to protect cytoplasmic proteins from being degraded by prematurely activated/folded prostaphopain B. Also involved in growth capacity, viability and bacterial morphology. The sequence is that of Staphostatin B (sspC) from Staphylococcus aureus (strain NCTC 8325 / PS 47).